Reading from the N-terminus, the 55-residue chain is Large ribosomal subunit protein bL33 (55 aa).

It belongs to the bacterial ribosomal protein bL33 family.

The protein is Large ribosomal subunit protein bL33 of Bartonella bacilliformis (strain ATCC 35685 / KC583 / Herrer 020/F12,63).